The primary structure comprises 423 residues: uncharacterized protein (423 aa).

Belongs to the mycobacterial PPE family.

Its function is as follows. Could be required for host endothelial-cell invasion and/or intracellular survival. This is an uncharacterized protein from Mycobacterium tuberculosis (strain CDC 1551 / Oshkosh).